Reading from the N-terminus, the 49-residue chain is MRVGITLACTECKNRNYASIKNKKNNPDRLEVKKYCKFCKSHTAHKETK.

Belongs to the bacterial ribosomal protein bL33 family.

The protein is Large ribosomal subunit protein bL33 of Desulfitobacterium hafniense (strain Y51).